A 232-amino-acid polypeptide reads, in one-letter code: Ribonuclease P protein component 3 (232 aa).

This sequence belongs to the eukaryotic/archaeal RNase P protein component 3 family. As to quaternary structure, consists of a catalytic RNA component and at least 4-5 protein subunits.

It localises to the cytoplasm. The enzyme catalyses Endonucleolytic cleavage of RNA, removing 5'-extranucleotides from tRNA precursor.. Its function is as follows. Part of ribonuclease P, a protein complex that generates mature tRNA molecules by cleaving their 5'-ends. This is Ribonuclease P protein component 3 from Methanococcus maripaludis (strain C7 / ATCC BAA-1331).